The sequence spans 547 residues: Probable aquaporin-5 (547 aa).

The segment covering 1–13 (MSSSILNNRSARS) has biased composition (polar residues). Positions 1–208 (MSSSILNNRS…DPRIPPNDRR (208 aa)) are disordered. Residues 1–269 (MSSSILNNRS…QWMNSNFKNH (269 aa)) are Cytoplasmic-facing. Residues 15-32 (PAGANPAFNPPAEASSSS) are compositionally biased toward low complexity. Basic and acidic residues-rich tracts occupy residues 152–169 (EYERYYRNEGRNDRDRYT) and 198–208 (DDPRIPPNDRR). The chain crosses the membrane as a helical span at residues 270 to 290 (FVAGVGEFIGTTMFLFFAFAG). Over 291-316 (TEVANIQADTTNRTTTGESTGSLNVS) the chain is Extracellular. 2 N-linked (GlcNAc...) asparagine glycosylation sites follow: asparagine 302 and asparagine 314. The chain crosses the membrane as a helical span at residues 317 to 337 (KLLYISIIFGFSLMVNVWVFF). The Cytoplasmic portion of the chain corresponds to 338-363 (RISGGLFNPAVTMAMLMVKAISVTRA). Positions 345 to 347 (NPA) match the NPA 1 motif. The helical transmembrane segment at 364–384 (IVLFLAQILGSMLASVVVRYL) threads the bilayer. The Extracellular segment spans residues 385–400 (FPETFNVRTTLGGGAS). Residues 401-421 (LVQGVFIEALLTAELVFTIFM) form a helical membrane-spanning segment. The Cytoplasmic segment spans residues 422–428 (LAKEKHR). Residues 429–449 (ATFIAPVGIGLALFIAEMVGV) traverse the membrane as a helical segment. At 450 to 475 (QFTGGSLNPARSFGPCVITGSFDTEH) the chain is on the extracellular side. Residues 457–459 (NPA) carry the NPA 2 motif. A helical transmembrane segment spans residues 476-496 (WIYWVGPAIGSLIAVCFYWFI). Topologically, residues 497 to 547 (KTLEYEMANPGADGDDLNDPTKNPEKRAEIQASKPVPTAAFGSGKTASILS) are cytoplasmic. A disordered region spans residues 510-547 (GDDLNDPTKNPEKRAEIQASKPVPTAAFGSGKTASILS).

It belongs to the MIP/aquaporin (TC 1.A.8) family.

The protein resides in the membrane. The catalysed reaction is H2O(in) = H2O(out). In terms of biological role, probable water channel that may have redundant functions with FgAQP3. The sequence is that of Probable aquaporin-5 from Gibberella zeae (strain ATCC MYA-4620 / CBS 123657 / FGSC 9075 / NRRL 31084 / PH-1) (Wheat head blight fungus).